The sequence spans 469 residues: 3-isopropylmalate dehydratase large subunit (469 aa).

Cysteine 347, cysteine 407, and cysteine 410 together coordinate [4Fe-4S] cluster.

The protein belongs to the aconitase/IPM isomerase family. LeuC type 1 subfamily. In terms of assembly, heterodimer of LeuC and LeuD. [4Fe-4S] cluster is required as a cofactor.

It catalyses the reaction (2R,3S)-3-isopropylmalate = (2S)-2-isopropylmalate. It participates in amino-acid biosynthesis; L-leucine biosynthesis; L-leucine from 3-methyl-2-oxobutanoate: step 2/4. Its function is as follows. Catalyzes the isomerization between 2-isopropylmalate and 3-isopropylmalate, via the formation of 2-isopropylmaleate. In Prochlorococcus marinus (strain MIT 9515), this protein is 3-isopropylmalate dehydratase large subunit.